A 223-amino-acid polypeptide reads, in one-letter code: Ribonuclease T (223 aa).

The region spanning 20 to 194 is the Exonuclease domain; it reads VVIDVETAGF…YDTNQTALLF (175 aa). 4 residues coordinate Mg(2+): Asp23, Glu25, His181, and Asp186. The Proton donor/acceptor role is filled by His181.

Belongs to the RNase T family. As to quaternary structure, homodimer. The cofactor is Mg(2+).

Trims short 3' overhangs of a variety of RNA species, leaving a one or two nucleotide 3' overhang. Responsible for the end-turnover of tRNA: specifically removes the terminal AMP residue from uncharged tRNA (tRNA-C-C-A). Also appears to be involved in tRNA biosynthesis. The sequence is that of Ribonuclease T from Pectobacterium atrosepticum (strain SCRI 1043 / ATCC BAA-672) (Erwinia carotovora subsp. atroseptica).